The following is a 499-amino-acid chain: Rhodopsin, GQ-coupled (499 aa).

At 1 to 50 (MADNKSTLPGLPDINGTLNRSMTPNTGWEGPYDMSVHLHWTQFPPVTEEW) the chain is on the extracellular side. N-linked (GlcNAc...) asparagine glycans are attached at residues N4, N15, and N19. A helical transmembrane segment spans residues 51 to 75 (HYIIGVYITIVGLLGIMGNTTVVYI). Over 76 to 87 (FSNTKSLRSPSN) the chain is Cytoplasmic. The helical transmembrane segment at 88–114 (LFVVNLAVSDLIFSAVNGFPLLTVSSF) threads the bilayer. Residues 115 to 128 (HQKWIFGSLFCQLY) lie on the Extracellular side of the membrane. The cysteines at positions 125 and 203 are disulfide-linked. The helical transmembrane segment at 129–148 (GFVGGVFGLMSINTLTAISI) threads the bilayer. Topologically, residues 149 to 168 (DRYVVITKPLQASQTMTRRK) are cytoplasmic. A helical membrane pass occupies residues 169 to 192 (VHLMIVIVWVLSILLSIPPFFGWG). Over 193-216 (AYIPEGFQTSCTFDYLTKTARTRT) the chain is Extracellular. The chain crosses the membrane as a helical span at residues 217–244 (YIVVLYLFGFLIPLIIIGVCYVLIIRGV). At 245 to 278 (RRHDQKMLTITRSMKTEDARANNKRARSELRISK) the chain is on the cytoplasmic side. Residues 279–302 (IAMTVTCLFIISWSPYAIIALIAQ) traverse the membrane as a helical segment. Residues 303–310 (FGPAHWIT) are Extracellular-facing. Residues 311-335 (PLVSELPMMLAKSSSMHNPVVYALS) form a helical membrane-spanning segment. N6-(retinylidene)lysine is present on K322. Over 336–499 (HPKFRKALYQ…QRVNGLTFNS (164 aa)) the chain is Cytoplasmic. Residues C353 and C354 are each lipidated (S-palmitoyl cysteine).

Belongs to the G-protein coupled receptor 1 family. Opsin subfamily. In terms of processing, phosphorylated on some or all of the serine and threonine residues present in the C-terminal region. Retina. Expressed in the depolarizing cell layer of the photoreceptor cells distant from the lens.

It localises to the membrane. In terms of biological role, visual pigments such as rhodopsin and porphyropsin are light-absorbing molecules that mediate vision. Rhodopsin consists of an apoprotein, opsin, covalently linked to 11-cis-retinal. This receptor is coupled to the activation of phospholipase C. Porphyropsin consists of opsin covalently linked to 11-cis 3,4-didehydroretinal. This Mizuhopecten yessoensis (Japanese scallop) protein is Rhodopsin, GQ-coupled (SCOP1).